A 1755-amino-acid polypeptide reads, in one-letter code: E3 ubiquitin-protein ligase UBR2 (1755 aa).

Ala-2 carries the post-translational modification N-acetylalanine. Lys-94 participates in a covalent cross-link: Glycyl lysine isopeptide (Lys-Gly) (interchain with G-Cter in ubiquitin). A UBR-type zinc finger spans residues 97 to 168 (HLCGRVFKVG…EGPYCQKHEL (72 aa)). Zn(2+) contacts are provided by Cys-99, Cys-112, Cys-115, Cys-124, Cys-127, His-133, and His-136. Phe-148 contributes to the a peptide binding site. Cys-149 is a binding site for Zn(2+). Asp-150 contacts a peptide. Cys-151 is a binding site for Zn(2+). Asp-153 contacts a peptide. Lys-158 participates in a covalent cross-link: Glycyl lysine isopeptide (Lys-Gly) (interchain with G-Cter in ubiquitin). A Zn(2+)-binding site is contributed by Cys-163. Residue Lys-165 forms a Glycyl lysine isopeptide (Lys-Gly) (interchain with G-Cter in ubiquitin) linkage. His-166 serves as a coordination point for Zn(2+). Residues Lys-248, Lys-255, and Lys-470 each participate in a glycyl lysine isopeptide (Lys-Gly) (interchain with G-Cter in ubiquitin) cross-link. Ser-476 is modified (phosphoserine). Residues Lys-488, Lys-568, Lys-779, and Lys-789 each participate in a glycyl lysine isopeptide (Lys-Gly) (interchain with G-Cter in ubiquitin) cross-link. The disordered stretch occupies residues 1004–1034 (ESSPTSPVAETEGTIMEESSRDKDKAERKRK). Positions 1019–1054 (MEESSRDKDKAERKRKAEIARLRREKIMAQMSEMQR) form a coiled coil. The span at 1021–1034 (ESSRDKDKAERKRK) shows a compositional bias: basic and acidic residues. Zn(2+) is bound by residues Cys-1108, Cys-1111, Cys-1168, His-1170, His-1173, Cys-1176, Cys-1210, and Cys-1213. The segment at 1108-1214 (CILCQEEQEV…NGEFLCPLCE (107 aa)) adopts an RING-type; atypical zinc-finger fold. Residues 1261 to 1287 (RKEESTPNNASTKNSENVDELQLPEGF) form a disordered region. Over residues 1266–1275 (TPNNASTKNS) the composition is skewed to polar residues. Glycyl lysine isopeptide (Lys-Gly) (interchain with G-Cter in ubiquitin) cross-links involve residues Lys-1496, Lys-1599, and Lys-1689. Ser-1694 is subject to Phosphoserine. The residue at position 1697 (Tyr-1697) is a Phosphotyrosine.

Belongs to the E3 ubiquitin-protein ligase UBR1-like family. In terms of assembly, interacts with UBE2B; promotes the UBE2B-H2A interaction and the ubiquitination of histone H2A by UBE2B and UBR2. Interacts with RECQL4. Interacts with TEX19; does not lead to TEX19 degradation and stabilizes it. Interacts with CASP8. Interacts with ATXN3. Interacts with UBE2O. Post-translationally, dephosphorylated by DUSP22 at Ser-1694 and Tyr-1697, leading to subsequent ubiquitination and proteasomal degradation. 'Lys-48'-linked ubiquitinated at Lys-94, Lys-779 and Lys-1599 following DUSP22-mediated dephosphorylation of Ser-1694 and Tyr-1697 which promotes UBR2 interaction with the SCF(FBW1A) E3 ubiquitin-protein ligase complex. In terms of tissue distribution, broadly expressed, with highest levels in skeletal muscle, kidney and pancreas. Present in acinar cells of the pancreas (at protein level).

The protein localises to the nucleus. It localises to the chromosome. The enzyme catalyses S-ubiquitinyl-[E2 ubiquitin-conjugating enzyme]-L-cysteine + [acceptor protein]-L-lysine = [E2 ubiquitin-conjugating enzyme]-L-cysteine + N(6)-ubiquitinyl-[acceptor protein]-L-lysine.. The protein operates within protein modification; protein ubiquitination. In terms of biological role, E3 ubiquitin-protein ligase which is a component of the N-end rule pathway. Recognizes and binds to proteins bearing specific N-terminal residues (N-degrons) that are destabilizing according to the N-end rule, leading to their ubiquitination and subsequent degradation. Recognizes both type-1 and type-2 N-degrons, containing positively charged amino acids (Arg, Lys and His) and bulky and hydrophobic amino acids, respectively. Does not ubiquitinate proteins that are acetylated at the N-terminus. In contrast, it strongly binds methylated N-degrons. Plays a critical role in chromatin inactivation and chromosome-wide transcriptional silencing during meiosis via ubiquitination of histone H2A. Binds leucine and is a negative regulator of the leucine-mTOR signaling pathway, thereby controlling cell growth. Required for spermatogenesis, promotes, with Tex19.1, SPO11-dependent recombination foci to accumulate and drive robust homologous chromosome synapsis. Polyubiquitinates LINE-1 retrotransposon encoded, LIRE1, which induces degradation, inhibiting LINE-1 retrotransposon mobilization. Catalyzes ubiquitination and degradation of the N-terminal part of NLRP1 following NLRP1 activation by pathogens and other damage-associated signals: ubiquitination promotes degradation of the N-terminal part and subsequent release of the cleaved C-terminal part of NLRP1, which polymerizes and forms the NLRP1 inflammasome followed by host cell pyroptosis. Plays a role in T-cell receptor signaling by inducing 'Lys-63'-linked ubiquitination of lymphocyte cell-specific kinase LCK. This activity is regulated by DUSP22, which induces 'Lys-48'-linked ubiquitination of UBR2, leading to its proteasomal degradation by SCF E3 ubiquitin-protein ligase complex. This is E3 ubiquitin-protein ligase UBR2 (UBR2) from Homo sapiens (Human).